The chain runs to 129 residues: uncharacterized protein (129 aa).

Transmembrane regions (helical) follow at residues isoleucine 15–phenylalanine 35, isoleucine 48–phenylalanine 68, and isoleucine 107–cysteine 127.

It localises to the membrane. This is an uncharacterized protein from Saccharomyces cerevisiae (strain ATCC 204508 / S288c) (Baker's yeast).